We begin with the raw amino-acid sequence, 277 residues long: MRRPVPYHRVAAIMTILSLAGAGHQARLDARGGMLTGPTANLAPGHVQANLAILPQAVAGDFLRFCQRNPKPCPLLAVSEPGDPSLPELGLDIDIRTDVPRYRVWRDGKLVDEPLDVRGLWRDDLVAFLIGCSFSFEEAMLENGLPVRHIEQGCNVPMYRTNIATHPAGPFSGPLVVSMRPLKAADAIRAIQVTSRFPSVHGAPVHLGDPALIGIADLGRPDYGDAVEIRAGEIPVFWACGVTPQSVVAAVRPEFCITHAPGHMLVTDLLNSRLAAF.

Belongs to the D-glutamate cyclase family.

The protein is Putative hydro-lyase BPP3031 of Bordetella parapertussis (strain 12822 / ATCC BAA-587 / NCTC 13253).